We begin with the raw amino-acid sequence, 218 residues long: Large ribosomal subunit protein uL3 (218 aa).

A disordered region spans residues 126–170 (HGFSRGPMSHGSKNHREPGSTGAGTTPGRIYPGKRMAGRYGGKKR).

Belongs to the universal ribosomal protein uL3 family. Part of the 50S ribosomal subunit. Forms a cluster with proteins L14 and L19.

Its function is as follows. One of the primary rRNA binding proteins, it binds directly near the 3'-end of the 23S rRNA, where it nucleates assembly of the 50S subunit. This Prochlorococcus marinus (strain MIT 9313) protein is Large ribosomal subunit protein uL3.